Here is a 520-residue protein sequence, read N- to C-terminus: 5'-nucleotidase domain-containing protein 2 (520 aa).

Asp-73 functions as the Nucleophile in the catalytic mechanism. Mg(2+)-binding residues include Asp-73, Asp-75, and Asp-358. Asp-75 functions as the Proton donor in the catalytic mechanism.

Belongs to the 5'(3')-deoxyribonucleotidase family. As to quaternary structure, interacts with tyrosine 3-monooxygenase TH; the interaction results in reduced phosphorylation and decreased catalytic activity of TH.

It is found in the cytoplasm. Functionally, promotes dephosphorylation of tyrosine 3-monooxygenase TH which decreases TH catalytic activity and leads to reduced synthesis of catecholamines including dopamine, noradrenaline and adrenaline. The exact mechanism of activity is unknown but may act as a phosphatase or promote the activity of phosphatases or may inhibit phosphorylation by acting as a barrier to interfere with protein kinase access. The chain is 5'-nucleotidase domain-containing protein 2 (NT5DC2) from Homo sapiens (Human).